Here is a 64-residue protein sequence, read N- to C-terminus: Frontoxin V (64 aa).

Cystine bridges form between C3-C24, C6-C11, C17-C41, C45-C57, and C58-C63.

Expressed by the venom gland.

Its subcellular location is the secreted. Functionally, produces peripheral paralysis by blocking neuromuscular transmission at the postsynaptic site. Binds to the muscular nicotinic acetylcholine receptor (nAChR). The polypeptide is Frontoxin V (Micrurus frontalis (Coral snake)).